We begin with the raw amino-acid sequence, 326 residues long: Protein MICROTUBULE BINDING PROTEIN 2C (326 aa).

Composition is skewed to polar residues over residues 1-15 and 34-46; these read MYEQ…QSDS and PHQS…SGNE. Disordered stretches follow at residues 1–46 and 71–132; these read MYEQ…SGNE and ERSS…KALA. Positions 132–183 form a coiled coil; that stretch reads AGAEKEEMSRLREQVNDLQTKLSEKEEVLKSMEMSKNQVNEIQEKLEATNRL.

It belongs to the microtubule binding protein 2C family. Interacts with STM. As to expression, expressed in seedlings, roots, flowers and developing ovules.

Its subcellular location is the cytoplasm. It localises to the cytoskeleton. In terms of biological role, prevents homeodomain proteins (e.g. STM) association to plasmodesmata and, consequently, cell-to-cell transport. Binds to RNA. Alters STM RNA binding capacity. Regulates cytoskeleton (e.g. actin) organization that determinates cell shape. Regulates stomata patterning and drought tolerance. Involved in restricting tobamovirus (e.g. oilseed rape mosaic virus) infectivity, probably by interfering with cell-to-cell virus movement. This Arabidopsis thaliana (Mouse-ear cress) protein is Protein MICROTUBULE BINDING PROTEIN 2C.